Here is a 125-residue protein sequence, read N- to C-terminus: Large ribosomal subunit protein bL12 (125 aa).

It belongs to the bacterial ribosomal protein bL12 family. As to quaternary structure, homodimer. Part of the ribosomal stalk of the 50S ribosomal subunit. Forms a multimeric L10(L12)X complex, where L10 forms an elongated spine to which 2 to 4 L12 dimers bind in a sequential fashion. Binds GTP-bound translation factors.

Functionally, forms part of the ribosomal stalk which helps the ribosome interact with GTP-bound translation factors. Is thus essential for accurate translation. This Rickettsia prowazekii (strain Madrid E) protein is Large ribosomal subunit protein bL12.